Here is a 396-residue protein sequence, read N- to C-terminus: Elongation factor Tu (396 aa).

The tr-type G domain occupies 10–206 (KPHVNVGTIG…ALDTYIPTPE (197 aa)). Positions 19-26 (GHVDHGKT) are G1. Position 19–26 (19–26 (GHVDHGKT)) interacts with GTP. Threonine 26 contributes to the Mg(2+) binding site. The tract at residues 60 to 64 (GITIN) is G2. A G3 region spans residues 81 to 84 (DCPG). Residues 81 to 85 (DCPGH) and 136 to 139 (NKCD) contribute to the GTP site. A G4 region spans residues 136-139 (NKCD). The G5 stretch occupies residues 174–176 (SAK).

It belongs to the TRAFAC class translation factor GTPase superfamily. Classic translation factor GTPase family. EF-Tu/EF-1A subfamily. In terms of assembly, monomer.

It localises to the cytoplasm. It carries out the reaction GTP + H2O = GDP + phosphate + H(+). In terms of biological role, GTP hydrolase that promotes the GTP-dependent binding of aminoacyl-tRNA to the A-site of ribosomes during protein biosynthesis. This Burkholderia cenocepacia (strain HI2424) protein is Elongation factor Tu.